We begin with the raw amino-acid sequence, 338 residues long: Protein pelota homolog (338 aa).

The protein belongs to the eukaryotic release factor 1 family. Pelota subfamily. As to quaternary structure, monomer. The cofactor is a divalent metal cation.

It is found in the cytoplasm. Functionally, may function in recognizing stalled ribosomes, interact with stem-loop structures in stalled mRNA molecules, and effect endonucleolytic cleavage of the mRNA. May play a role in the release non-functional ribosomes and degradation of damaged mRNAs. Has endoribonuclease activity. The chain is Protein pelota homolog from Caldivirga maquilingensis (strain ATCC 700844 / DSM 13496 / JCM 10307 / IC-167).